The chain runs to 216 residues: MGQKTNPIGNRLGIIRTWESRWFAKKGYADQLIEDLKLRKMLKDKLYHAGISKIEIERVGEKVRVLIFAARPGIIIGKKGAEVERLKKEVEEKTGKQANIEIKEVRRPELDAQLVAENVALQIEKRVAYRRAMKRAVASSMRFGAKGIKVSCAGRLAGAEIARTEWYREGRVPLSTFRADIDYGFAEAKTTYGIIGVKVWIFKGEVQPGQYINYNY.

Residues 38-106 enclose the KH type-2 domain; sequence LRKMLKDKLY…QANIEIKEVR (69 aa).

This sequence belongs to the universal ribosomal protein uS3 family. In terms of assembly, part of the 30S ribosomal subunit. Forms a tight complex with proteins S10 and S14.

Functionally, binds the lower part of the 30S subunit head. Binds mRNA in the 70S ribosome, positioning it for translation. This is Small ribosomal subunit protein uS3 from Thermodesulfovibrio yellowstonii (strain ATCC 51303 / DSM 11347 / YP87).